We begin with the raw amino-acid sequence, 772 residues long: Hyperosmolality-gated Ca2+ permeable channel 1.1 (772 aa).

At 1–5 (MATLK) the chain is on the extracellular side. The helical transmembrane segment at 6 to 28 (DIGVSAGINILTAFIFFIIFAFL) threads the bilayer. At 29–100 (RLQPFNDRVY…AGLDSVVYLR (72 aa)) the chain is on the cytoplasmic side. A helical membrane pass occupies residues 101–122 (IYWLGLKIFAPIAMLAWAVLVP). Over 123–159 (VNWTNNELELAKHFKNVTSSDIDKLTISNIPEGSNRF) the chain is Extracellular. The N-linked (GlcNAc) asparagine glycan is linked to N138. The helical transmembrane segment at 160–180 (WAHIIMAYAFTIWTCYMLMKE) threads the bilayer. The Cytoplasmic portion of the chain corresponds to 181-372 (YETVANMRLQ…PNLAIPYVSL (192 aa)). Positions 339 to 344 (QTTQTR) are cytoplasmic region required for homodimerization. A helical transmembrane segment spans residues 373–398 (TVRRLVMNVAFFFLTFFFIIPIAFVQ). The Extracellular segment spans residues 399-424 (SLATIEGIEKVAPFLKVIIEKDFIKS). Residues 425 to 450 (LIQGLLAGIALKLFLIFLPAILMTMS) form a helical membrane-spanning segment. The Cytoplasmic portion of the chain corresponds to 451–461 (KFEGFTSVSFL). The chain crosses the membrane as a helical span at residues 462-485 (ERRSASRYYIFNLVNVFLGSVIAG). The Extracellular segment spans residues 486–509 (AAFEQLNSFLNQSPNQIPKTIGMA). A helical transmembrane segment spans residues 510-538 (IPMKATFFITYIMVDGWAGVAGEILMLKP). Over 539–566 (LIIYHLKNAFLVKTEKDREEAMNPGSIG) the chain is Cytoplasmic. The chain crosses the membrane as a helical span at residues 567–587 (FNTGEPQIQLYFLLGLVYAPV). T588 is a topological domain (extracellular). The chain crosses the membrane as a helical span at residues 589–606 (PMLLPFILVFFALAYVVY). Residues 607-624 (RHQIINVYNQEYESAAAF) are Cytoplasmic-facing. Residues 625–647 (WPDVHGRVITALIISQLLLMGLL) traverse the membrane as a helical segment. Over 648–653 (GTKHAA) the chain is Extracellular. A helical transmembrane segment spans residues 654-674 (SAAPFLIALPVITIGFHRFCK). At 675-772 (GRFEPAFVRY…SLAVINGKEV (98 aa)) the chain is on the cytoplasmic side. A cytoplasmic region required for homodimerization region spans residues 686–688 (LQE). A disordered region spans residues 743–772 (KRQSRRNTPAPSRISGESSPSLAVINGKEV). The segment covering 748 to 763 (RNTPAPSRISGESSPS) has biased composition (polar residues).

This sequence belongs to the CSC1 (TC 1.A.17) family. In terms of assembly, homodimer. In terms of tissue distribution, expressed in leaves, flowers, roots and guard cells.

Its subcellular location is the cell membrane. Its activity is regulated as follows. Activated by mechanical pressure. Its function is as follows. Acts as a hyperosmolarity-gated non-selective cation channel that permeates Ca(2+) ions. Shows the following permeability sequence: K(+) &gt; Ba(2+) = Ca(2+) &gt; Na(+) = Mg(2+) = Cs(+). Mechanosensitive ion channel that converts mechanical stimuli into a flow of ions: activated in response to membrane stretch and poke. The protein is Hyperosmolality-gated Ca2+ permeable channel 1.1 of Arabidopsis thaliana (Mouse-ear cress).